The following is a 418-amino-acid chain: Beta-arrestin-1 (418 aa).

An interaction with SRC region spans residues 1–163; it reads MGDKGTRVFK…LEEKIHKRNS (163 aa). The tract at residues 45–86 is interaction with CHRM2; that stretch reads PEYLKERRVYVTLTCAFRYGREDLDVLGLTFRKDLFVANVQS. Tyr-47 is subject to Phosphotyrosine. Positions 250, 255, 324, and 326 each coordinate 1D-myo-inositol hexakisphosphate. The interaction with TRAF6 stretch occupies residues 318–418; that stretch reads IVSYKVKVKL…GTGSPHLNNR (101 aa). Disordered regions lie at residues 353–375 and 397–418; these read HPKPKEEPPHREVPESETPVDTN and KGMKDDKDEEDDGTGSPHLNNR. The span at 355–366 shows a compositional bias: basic and acidic residues; that stretch reads KPKEEPPHREVP. Ser-412 carries the post-translational modification Phosphoserine.

Belongs to the arrestin family. As to quaternary structure, monomer. Homodimer. Homooligomer; the self-association is mediated by InsP6-binding. Heterooligomer with ARRB2; the association is mediated by InsP6-binding. Interacts with ADRB2 (phosphorylated). Interacts with CHRM2 (phosphorylated). Interacts with LHCGR. Interacts with CYTH2 and CASR. Interacts with AP2B1 (dephosphorylated); phosphorylation of AP2B1 disrupts the interaction. Interacts (dephosphorylated at Ser-412) with CLTC. Interacts with CCR2 and GRK2. Interacts with CRR5. Interacts with PTAFR (phosphorylated on serine residues). Interacts with CLTC and MAP2K3. Interacts with CREB1. Interacts with TRAF6. Interacts with IGF1R and MDM2. Interacts with C5AR1. Interacts with PDE4D. Interacts with SRC (via the SH3 domain and the protein kinase domain); the interaction is independent of the phosphorylation state of SRC C-terminus. Interacts with TACR1. Interacts with RAF1. Interacts with DVL1; the interaction is enhanced by phosphorylation of DVL1. Interacts with DVL2; the interaction is enhanced by phosphorylation of DVL2. Interacts with IGF1R. Interacts with CHUK, IKBKB and MAP3K14. Associates with MAP kinase p38. Part of a MAPK signaling complex consisting of TACR1, ARRB1, SRC, MAPK1 (activated) and MAPK3 (activated). Part of a MAPK signaling complex consisting of F2RL1, ARRB1, RAF1, MAPK1 (activated) and MAPK3 (activated). Interacts with GPR143. Interacts with MAP2K4/MKK4. Interacts with HCK and CXCR1 (phosphorylated). Interacts with ACKR3 and ACKR4. Interacts with ARRDC1; the interaction is direct. Interacts with GPR61, GPR62 and GPR135. In terms of processing, constitutively phosphorylated at in the cytoplasm. At the plasma membrane, is rapidly dephosphorylated, a process that is required for clathrin binding and ADRB2 endocytosis but not for ADRB2 binding and desensitization. Once internalized, is rephosphorylated. Post-translationally, the ubiquitination status appears to regulate the formation and trafficking of beta-arrestin-GPCR complexes and signaling. Ubiquitination appears to occur GPCR-specific. Ubiquitinated by MDM2; the ubiquitination is required for rapid internalization of ADRB2. Deubiquitinated by USP33; the deubiquitination leads to a dissociation of the beta-arrestin-GPCR complex. Stimulation of a class A GPCR, such as ADRB2, induces transient ubiquitination and subsequently promotes association with USP33.

The protein resides in the cytoplasm. It localises to the nucleus. Its subcellular location is the cell membrane. It is found in the membrane. The protein localises to the clathrin-coated pit. The protein resides in the cell projection. It localises to the pseudopodium. Its subcellular location is the cytoplasmic vesicle. Functionally, functions in regulating agonist-mediated G-protein coupled receptor (GPCR) signaling by mediating both receptor desensitization and resensitization processes. During homologous desensitization, beta-arrestins bind to the GPRK-phosphorylated receptor and sterically preclude its coupling to the cognate G-protein; the binding appears to require additional receptor determinants exposed only in the active receptor conformation. The beta-arrestins target many receptors for internalization by acting as endocytic adapters (CLASPs, clathrin-associated sorting proteins) and recruiting the GPRCs to the adapter protein 2 complex 2 (AP-2) in clathrin-coated pits (CCPs). However, the extent of beta-arrestin involvement appears to vary significantly depending on the receptor, agonist and cell type. Internalized arrestin-receptor complexes traffic to intracellular endosomes, where they remain uncoupled from G-proteins. Two different modes of arrestin-mediated internalization occur. Class A receptors, like ADRB2, OPRM1, ENDRA, D1AR and ADRA1B dissociate from beta-arrestin at or near the plasma membrane and undergo rapid recycling. Class B receptors, like AVPR2, AGTR1, NTSR1, TRHR and TACR1 internalize as a complex with arrestin and traffic with it to endosomal vesicles, presumably as desensitized receptors, for extended periods of time. Receptor resensitization then requires that receptor-bound arrestin is removed so that the receptor can be dephosphorylated and returned to the plasma membrane. Involved in internalization of P2RY4 and UTP-stimulated internalization of P2RY2. Involved in phosphorylation-dependent internalization of OPRD1 ands subsequent recycling. Involved in the degradation of cAMP by recruiting cAMP phosphodiesterases to ligand-activated receptors. Beta-arrestins function as multivalent adapter proteins that can switch the GPCR from a G-protein signaling mode that transmits short-lived signals from the plasma membrane via small molecule second messengers and ion channels to a beta-arrestin signaling mode that transmits a distinct set of signals that are initiated as the receptor internalizes and transits the intracellular compartment. Acts as a signaling scaffold for MAPK pathways such as MAPK1/3 (ERK1/2). ERK1/2 activated by the beta-arrestin scaffold is largely excluded from the nucleus and confined to cytoplasmic locations such as endocytic vesicles, also called beta-arrestin signalosomes. Recruits c-Src/SRC to ADRB2 resulting in ERK activation. GPCRs for which the beta-arrestin-mediated signaling relies on both ARRB1 and ARRB2 (codependent regulation) include ADRB2, F2RL1 and PTH1R. For some GPCRs the beta-arrestin-mediated signaling relies on either ARRB1 or ARRB2 and is inhibited by the other respective beta-arrestin form (reciprocal regulation). Inhibits ERK1/2 signaling in AGTR1- and AVPR2-mediated activation (reciprocal regulation). Is required for SP-stimulated endocytosis of NK1R and recruits c-Src/SRC to internalized NK1R resulting in ERK1/2 activation, which is required for the antiapoptotic effects of SP. Is involved in proteinase-activated F2RL1-mediated ERK activity. Acts as a signaling scaffold for the AKT1 pathway. Is involved in alpha-thrombin-stimulated AKT1 signaling. Is involved in IGF1-stimulated AKT1 signaling leading to increased protection from apoptosis. Involved in activation of the p38 MAPK signaling pathway and in actin bundle formation. Involved in F2RL1-mediated cytoskeletal rearrangement and chemotaxis. Involved in AGTR1-mediated stress fiber formation by acting together with GNAQ to activate RHOA. Appears to function as signaling scaffold involved in regulation of MIP-1-beta-stimulated CCR5-dependent chemotaxis. Involved in attenuation of NF-kappa-B-dependent transcription in response to GPCR or cytokine stimulation by interacting with and stabilizing CHUK. May serve as nuclear messenger for GPCRs. Involved in OPRD1-stimulated transcriptional regulation by translocating to CDKN1B and FOS promoter regions and recruiting EP300 resulting in acetylation of histone H4. Involved in regulation of LEF1 transcriptional activity via interaction with DVL1 and/or DVL2 Also involved in regulation of receptors other than GPCRs. Involved in Toll-like receptor and IL-1 receptor signaling through the interaction with TRAF6 which prevents TRAF6 autoubiquitination and oligomerization required for activation of NF-kappa-B and JUN. Involved in IL8-mediated granule release in neutrophils. Binds phosphoinositides. Binds inositolhexakisphosphate (InsP6). Required for atypical chemokine receptor ACKR2-induced RAC1-LIMK1-PAK1-dependent phosphorylation of cofilin (CFL1) and for the up-regulation of ACKR2 from endosomal compartment to cell membrane, increasing its efficiency in chemokine uptake and degradation. Involved in the internalization of the atypical chemokine receptor ACKR3. Negatively regulates the NOTCH signaling pathway by mediating the ubiquitination and degradation of NOTCH1 by ITCH. Participates in the recruitment of the ubiquitin-protein ligase to the receptor. The polypeptide is Beta-arrestin-1 (Arrb1) (Mus musculus (Mouse)).